We begin with the raw amino-acid sequence, 378 residues long: Protein RecA (378 aa).

Gly-79–Thr-86 contacts ATP.

This sequence belongs to the RecA family.

The protein resides in the cytoplasm. Its function is as follows. Can catalyze the hydrolysis of ATP in the presence of single-stranded DNA, the ATP-dependent uptake of single-stranded DNA by duplex DNA, and the ATP-dependent hybridization of homologous single-stranded DNAs. It interacts with LexA causing its activation and leading to its autocatalytic cleavage. This is Protein RecA from Streptococcus equi subsp. zooepidemicus (strain H70).